The chain runs to 100 residues: Small ribosomal subunit protein uS14c (100 aa).

This sequence belongs to the universal ribosomal protein uS14 family. As to quaternary structure, part of the 30S ribosomal subunit.

The protein resides in the plastid. It is found in the chloroplast. In terms of biological role, binds 16S rRNA, required for the assembly of 30S particles. The chain is Small ribosomal subunit protein uS14c from Platanus occidentalis (Sycamore).